The chain runs to 134 residues: Large ribosomal subunit protein uL16c (134 aa).

The protein belongs to the universal ribosomal protein uL16 family. In terms of assembly, part of the 50S ribosomal subunit.

Its subcellular location is the plastid. It localises to the chloroplast. The sequence is that of Large ribosomal subunit protein uL16c from Solanum lycopersicum (Tomato).